We begin with the raw amino-acid sequence, 256 residues long: 5-oxoprolinase subunit A (256 aa).

Belongs to the LamB/PxpA family. In terms of assembly, forms a complex composed of PxpA, PxpB and PxpC.

It carries out the reaction 5-oxo-L-proline + ATP + 2 H2O = L-glutamate + ADP + phosphate + H(+). Its function is as follows. Catalyzes the cleavage of 5-oxoproline to form L-glutamate coupled to the hydrolysis of ATP to ADP and inorganic phosphate. This chain is 5-oxoprolinase subunit A, found in Geobacillus kaustophilus (strain HTA426).